Reading from the N-terminus, the 210-residue chain is Probable GTP-binding protein EngB (210 aa).

The EngB-type G domain occupies 25-199 (RGIEVAFAGR…RQKLDSWFSE (175 aa)). GTP contacts are provided by residues 33–40 (GRSNAGKS), 60–64 (GRTQL), 78–81 (DLPG), 145–148 (TKAD), and 178–180 (FSS). Residues serine 40 and threonine 62 each contribute to the Mg(2+) site.

It belongs to the TRAFAC class TrmE-Era-EngA-EngB-Septin-like GTPase superfamily. EngB GTPase family. The cofactor is Mg(2+).

Functionally, necessary for normal cell division and for the maintenance of normal septation. The protein is Probable GTP-binding protein EngB of Salmonella paratyphi B (strain ATCC BAA-1250 / SPB7).